Reading from the N-terminus, the 258-residue chain is Ribosomal RNA small subunit methyltransferase A (258 aa).

S-adenosyl-L-methionine-binding residues include His-13, Leu-15, Gly-40, Glu-62, Asp-87, and Asn-108.

This sequence belongs to the class I-like SAM-binding methyltransferase superfamily. rRNA adenine N(6)-methyltransferase family. RsmA subfamily.

It localises to the cytoplasm. The catalysed reaction is adenosine(1518)/adenosine(1519) in 16S rRNA + 4 S-adenosyl-L-methionine = N(6)-dimethyladenosine(1518)/N(6)-dimethyladenosine(1519) in 16S rRNA + 4 S-adenosyl-L-homocysteine + 4 H(+). Its function is as follows. Specifically dimethylates two adjacent adenosines (A1518 and A1519) in the loop of a conserved hairpin near the 3'-end of 16S rRNA in the 30S particle. May play a critical role in biogenesis of 30S subunits. This chain is Ribosomal RNA small subunit methyltransferase A, found in Sulfurihydrogenibium sp. (strain YO3AOP1).